The sequence spans 317 residues: Pinoresinol reductase 1 (317 aa).

Residues threonine 18, tyrosine 20, isoleucine 21, arginine 41, lysine 50, serine 90, glycine 91, arginine 95, asparagine 98, serine 121, and glutamate 122 each contribute to the NADP(+) site. (-)-pinoresinol is bound at residue methionine 125. NADP(+) is bound by residues lysine 144 and phenylalanine 166. The active-site Proton acceptor is lysine 144. Residues methionine 177 and valine 178 each contribute to the (-)-pinoresinol site.

Belongs to the NmrA-type oxidoreductase family. Isoflavone reductase subfamily. In terms of assembly, forms homodimers. As to expression, expressed in roots and stems.

It catalyses the reaction (-)-lariciresinol + NADP(+) = (-)-pinoresinol + NADPH + H(+). It carries out the reaction (+)-lariciresinol + NADP(+) = (+)-pinoresinol + NADPH + H(+). Functionally, reductase involved in lignan biosynthesis. Involved in secondary cell wall biosynthesis in fiber cells. Unlike conventional pinoresinol reductases that can reduce both pinoresinol and lariciresinol, PRR1 shows a strict substrate preference toward pinoresinol. Active on both (+) and (-)-pinoresinol. Abstracts the 4R-hydride from the NADPH cofactor during catalysis. This is Pinoresinol reductase 1 from Arabidopsis thaliana (Mouse-ear cress).